Consider the following 203-residue polypeptide: MIGRVFRIFREKGGILKALGLWEWYENLPHKYQKKVKHYYSLKTIKSINFPYKAKHFDTGEVENVLYTKRTFLGTIAQTALLEGDLEFAEWLYNEALKMEGSPYEAHLILNDLVLLAQKQRDLEKVKKYVLQDVELYPEYKEELKSRWGGTLPQIMAFEIYVYLLEREGKIKEALELVEWIKKEGITYPYYDQVKERLLQKLK.

This is an uncharacterized protein from Aquifex aeolicus (strain VF5).